The chain runs to 628 residues: (-)-beta-pinene synthase 1, chloroplastic (628 aa).

The N-terminal 51 residues, 1–51 (MDLISVLPSASKSCVCLHKPLSSSTHKLKPFCRTIRILGMPRPRKSVLMVS), are a transit peptide targeting the chloroplast. Residues D379, D383, and D531 each coordinate Mg(2+). The DDXXD motif motif lies at 379–383 (DDMYD).

This sequence belongs to the terpene synthase family. Tpsd subfamily. Requires Mg(2+) as cofactor. Mn(2+) serves as cofactor.

The protein resides in the plastid. It localises to the chloroplast. The enzyme catalyses (2E)-geranyl diphosphate = (1S,5S)-beta-pinene + diphosphate. It catalyses the reaction (2E)-geranyl diphosphate = (1S,5S)-alpha-pinene + diphosphate. The protein operates within terpene metabolism; oleoresin biosynthesis. It participates in secondary metabolite biosynthesis; terpenoid biosynthesis. Its function is as follows. Monoterpene synthase (TPS) involved in the biosynthesis of monoterpene natural products included in conifer oleoresin secretions and volatile emissions; these compounds contribute to biotic and abiotic stress defense against herbivores and pathogens. Catalyzes the conversion of (2E)-geranyl diphosphate (GPP) to (-)-beta-pinene and, to a lower extent, to (-)-alpha-pinene. The protein is (-)-beta-pinene synthase 1, chloroplastic of Pinus banksiana (Jack pine).